The chain runs to 715 residues: Fatty acid oxidation complex subunit alpha (715 aa).

An enoyl-CoA hydratase/isomerase region spans residues 1–190 (MIYEGKAITV…KVGAVDAVVA (190 aa)). Asp-297 lines the substrate pocket. The interval 312–715 (HDVKQAAVLG…MAKNGQRFFN (404 aa)) is 3-hydroxyacyl-CoA dehydrogenase. NAD(+) contacts are provided by residues Met-325, Asp-344, 401-403 (VVE), Lys-408, and Ser-430. His-451 acts as the For 3-hydroxyacyl-CoA dehydrogenase activity in catalysis. NAD(+) is bound at residue Asn-454. Residues Asn-501 and Tyr-660 each coordinate substrate.

It in the N-terminal section; belongs to the enoyl-CoA hydratase/isomerase family. The protein in the C-terminal section; belongs to the 3-hydroxyacyl-CoA dehydrogenase family. In terms of assembly, heterotetramer of two alpha chains (FadB) and two beta chains (FadA).

It catalyses the reaction a (3S)-3-hydroxyacyl-CoA + NAD(+) = a 3-oxoacyl-CoA + NADH + H(+). It carries out the reaction a (3S)-3-hydroxyacyl-CoA = a (2E)-enoyl-CoA + H2O. The catalysed reaction is a 4-saturated-(3S)-3-hydroxyacyl-CoA = a (3E)-enoyl-CoA + H2O. The enzyme catalyses (3S)-3-hydroxybutanoyl-CoA = (3R)-3-hydroxybutanoyl-CoA. It catalyses the reaction a (3Z)-enoyl-CoA = a 4-saturated (2E)-enoyl-CoA. It carries out the reaction a (3E)-enoyl-CoA = a 4-saturated (2E)-enoyl-CoA. The protein operates within lipid metabolism; fatty acid beta-oxidation. Its function is as follows. Involved in the aerobic and anaerobic degradation of long-chain fatty acids via beta-oxidation cycle. Catalyzes the formation of 3-oxoacyl-CoA from enoyl-CoA via L-3-hydroxyacyl-CoA. It can also use D-3-hydroxyacyl-CoA and cis-3-enoyl-CoA as substrate. The sequence is that of Fatty acid oxidation complex subunit alpha from Pseudomonas putida (strain ATCC 47054 / DSM 6125 / CFBP 8728 / NCIMB 11950 / KT2440).